A 483-amino-acid chain; its full sequence is Fructose-like PTS system EIIBC component (483 aa).

Residues 1–105 (MESSLRIVAI…IDQIFSELPT (105 aa)) form the PTS EIIB type-2 domain. C13 (phosphocysteine intermediate; for EIIB activity) is an active-site residue. Residue C13 is modified to Phosphocysteine; by EIIA. The region spanning 128 to 475 (VMSHLMAGVS…LWLRRKAKAA (348 aa)) is the PTS EIIC type-2 domain. The next 10 helical transmembrane spans lie at 132-152 (LMAG…LVAL), 180-200 (IGYL…ASSI), 204-224 (PAFA…LLGT), 227-247 (GAGF…VFWF), 264-284 (LIPF…IGPV), 303-323 (MKFA…GGPI), 344-364 (AIVG…TFIA), 380-400 (IVVG…AAPL), 402-422 (MITA…AFGI), and 442-462 (VGSF…FIIV).

It localises to the cell inner membrane. The catalysed reaction is D-fructose(out) + N(pros)-phospho-L-histidyl-[protein] = D-fructose 1-phosphate(in) + L-histidyl-[protein]. In terms of biological role, the phosphoenolpyruvate-dependent sugar phosphotransferase system (sugar PTS), a major carbohydrate active transport system, catalyzes the phosphorylation of incoming sugar substrates concomitantly with their translocation across the cell membrane. The enzyme II FrvAB PTS system is involved in fructose transport. This Escherichia coli (strain K12) protein is Fructose-like PTS system EIIBC component.